A 1024-amino-acid chain; its full sequence is Beta-galactosidase (1024 aa).

Asparagine 103 and aspartate 202 together coordinate substrate. Aspartate 202 is a binding site for Na(+). Residues glutamate 417, histidine 419, and glutamate 462 each coordinate Mg(2+). Substrate contacts are provided by residues glutamate 462 and 538 to 541 (EYAH). The active-site Proton donor is glutamate 462. Glutamate 538 serves as the catalytic Nucleophile. Position 598 (asparagine 598) interacts with Mg(2+). Positions 602 and 605 each coordinate Na(+). Positions 605 and 1000 each coordinate substrate.

The protein belongs to the glycosyl hydrolase 2 family. In terms of assembly, homotetramer. It depends on Mg(2+) as a cofactor. The cofactor is Na(+).

The enzyme catalyses Hydrolysis of terminal non-reducing beta-D-galactose residues in beta-D-galactosides.. This chain is Beta-galactosidase, found in Escherichia coli O9:H4 (strain HS).